The primary structure comprises 132 residues: Fatty acid-binding protein, adipocyte (132 aa).

An N-acetylcysteine modification is found at C2. S13 carries the post-translational modification Phosphoserine. The residue at position 20 (Y20) is a Phosphotyrosine; by Tyr-kinases. A Nuclear localization signal motif is present at residues 22-32; that stretch reads KEVGVGFATRK. 127–129 lines the a fatty acid pocket; the sequence is RVY.

The protein belongs to the calycin superfamily. Fatty-acid binding protein (FABP) family. As to quaternary structure, monomer. Homodimer. Interacts with PPARG.

It is found in the cytoplasm. It localises to the nucleus. Its function is as follows. Lipid transport protein in adipocytes. Binds both long chain fatty acids and retinoic acid. Delivers long-chain fatty acids and retinoic acid to their cognate receptors in the nucleus. FABPs are important elements related to the hibernating state in mammals. This Ictidomys tridecemlineatus (Thirteen-lined ground squirrel) protein is Fatty acid-binding protein, adipocyte (FABP4).